Reading from the N-terminus, the 220-residue chain is 1-Cys peroxiredoxin B (220 aa).

A Thioredoxin domain is found at 4-165 (LTLGDVVPDL…VLRATDALLT (162 aa)). Cys-46 (cysteine sulfenic acid (-SOH) intermediate) is an active-site residue. Positions 195-218 (KARFPAGFETAQLPSNKCYLRFTQ) match the Bipartite nuclear localization signal motif.

This sequence belongs to the peroxiredoxin family. Prx6 subfamily.

The protein resides in the nucleus. It is found in the cytoplasm. The catalysed reaction is a hydroperoxide + [thioredoxin]-dithiol = an alcohol + [thioredoxin]-disulfide + H2O. Functionally, thiol-specific peroxidase that catalyzes the reduction of hydrogen peroxide and organic hydroperoxides to water and alcohols, respectively. Seems to contribute to the inhibition of germination during stress. This Oryza sativa subsp. japonica (Rice) protein is 1-Cys peroxiredoxin B.